A 398-amino-acid chain; its full sequence is Subtilisin-like serine protease EN45_076310 (398 aa).

The first 19 residues, 1–19, serve as a signal peptide directing secretion; it reads MGFLKLLSTSLATLAVVNA. A propeptide spans 20–115 (removed in mature form); it reads GKLLTANDGD…VEPDMVVNAT (96 aa). In terms of domain architecture, Inhibitor I9 spans 35–113; it reads SYIVVMNDGV…KYVEPDMVVN (79 aa). Asparagine 113 carries an N-linked (GlcNAc...) asparagine glycan. The interval 124–134 is igE-binding; the sequence is PSWGLSRISSK. The Peptidase S8 domain occupies 125 to 398; that stretch reads SWGLSRISSK…KLLYNGINAQ (274 aa). The Charge relay system role is filled by aspartate 157. An igE-binding region spans residues 163 to 170; that stretch reads GHADFGGR. The segment at 175–195 is disordered; it reads TNTADNDDTDGNGHGTHTAST. The Charge relay system role is filled by histidine 188. The tract at residues 227 to 245 is igE-binding; that stretch reads IAGMDWAVKDSKSRGATGK. Asparagine 249 is a glycosylation site (N-linked (GlcNAc...) asparagine). The tract at residues 310–318 is igE-binding; that stretch reads SFTNFGSVV. The active-site Charge relay system is serine 343.

Belongs to the peptidase S8 family.

The protein resides in the secreted. With respect to regulation, inhibited by phenylmethanesulfonyl fluoride (PMSF) and diethyl pyrocarbonate (DEPC), but not by benzamidine. Its function is as follows. Serine protease that hydrolyzes casein, gelatin and human collagen type IV, but not elastin in vitro. Hydrolyzes OCLN of the human lung epithelial cells at 202-Gln-|-Ser-203 and Gln-211-|-Ile-212. In Penicillium chrysogenum (Penicillium notatum), this protein is Subtilisin-like serine protease EN45_076310.